The sequence spans 236 residues: Purine nucleoside phosphorylase DeoD-type (236 aa).

Position 4 (His-4) interacts with a purine D-ribonucleoside. Phosphate is bound by residues Gly-20, Arg-24, Arg-43, and 87–90; that span reads RVGT. A purine D-ribonucleoside is bound by residues 178-180 and 202-203; these read EME and SD. Asp-203 functions as the Proton donor in the catalytic mechanism.

The protein belongs to the PNP/UDP phosphorylase family. As to quaternary structure, homohexamer; trimer of homodimers.

It catalyses the reaction a purine D-ribonucleoside + phosphate = a purine nucleobase + alpha-D-ribose 1-phosphate. It carries out the reaction a purine 2'-deoxy-D-ribonucleoside + phosphate = a purine nucleobase + 2-deoxy-alpha-D-ribose 1-phosphate. Catalyzes the reversible phosphorolytic breakdown of the N-glycosidic bond in the beta-(deoxy)ribonucleoside molecules, with the formation of the corresponding free purine bases and pentose-1-phosphate. This chain is Purine nucleoside phosphorylase DeoD-type, found in Geobacillus kaustophilus (strain HTA426).